A 352-amino-acid polypeptide reads, in one-letter code: 7,8-didemethyl-8-hydroxy-5-deazariboflavin synthase (352 aa).

The Radical SAM core domain maps to 35-275; it reads ITFSKNAFIP…EDISIQVPPN (241 aa). Cys-49, Cys-53, and Cys-56 together coordinate [4Fe-4S] cluster.

This sequence belongs to the radical SAM superfamily. CofG family. As to quaternary structure, consists of two subunits, CofG and CofH. It depends on [4Fe-4S] cluster as a cofactor.

The enzyme catalyses 5-amino-5-(4-hydroxybenzyl)-6-(D-ribitylimino)-5,6-dihydrouracil + S-adenosyl-L-methionine = 7,8-didemethyl-8-hydroxy-5-deazariboflavin + 5'-deoxyadenosine + L-methionine + NH4(+) + H(+). It participates in cofactor biosynthesis; coenzyme F0 biosynthesis. Functionally, catalyzes the radical-mediated synthesis of 7,8-didemethyl-8-hydroxy-5-deazariboflavin from 5-amino-5-(4-hydroxybenzyl)-6-(D-ribitylimino)-5,6-dihydrouracil. This chain is 7,8-didemethyl-8-hydroxy-5-deazariboflavin synthase, found in Methanococcus maripaludis (strain C6 / ATCC BAA-1332).